Consider the following 176-residue polypeptide: Ribosome rescue factor SmrB (176 aa).

The Smr domain maps to 98–173 (LDLHGLTQKQ…GTAALLLLIE (76 aa)).

It belongs to the SmrB family. Associates with collided ribosomes, but not with correctly translating polysomes.

In terms of biological role, acts as a ribosome collision sensor. Detects stalled/collided disomes (pairs of ribosomes where the leading ribosome is stalled and a second ribosome has collided with it) and endonucleolytically cleaves mRNA at the 5' boundary of the stalled ribosome. Stalled/collided disomes form a new interface (primarily via the 30S subunits) that binds SmrB. Cleaved mRNA becomes available for tmRNA ligation, leading to ribosomal subunit dissociation and rescue of stalled ribosomes. The sequence is that of Ribosome rescue factor SmrB from Yersinia pseudotuberculosis serotype O:1b (strain IP 31758).